We begin with the raw amino-acid sequence, 83 residues long: Cell division topological specificity factor (83 aa).

It belongs to the MinE family.

Functionally, prevents the cell division inhibition by proteins MinC and MinD at internal division sites while permitting inhibition at polar sites. This ensures cell division at the proper site by restricting the formation of a division septum at the midpoint of the long axis of the cell. In Marinobacter nauticus (strain ATCC 700491 / DSM 11845 / VT8) (Marinobacter aquaeolei), this protein is Cell division topological specificity factor.